The following is a 142-amino-acid chain: Large ribosomal subunit protein uL11 (142 aa).

Belongs to the universal ribosomal protein uL11 family. In terms of assembly, part of the ribosomal stalk of the 50S ribosomal subunit. Interacts with L10 and the large rRNA to form the base of the stalk. L10 forms an elongated spine to which L12 dimers bind in a sequential fashion forming a multimeric L10(L12)X complex. One or more lysine residues are methylated.

Its function is as follows. Forms part of the ribosomal stalk which helps the ribosome interact with GTP-bound translation factors. The polypeptide is Large ribosomal subunit protein uL11 (Photorhabdus laumondii subsp. laumondii (strain DSM 15139 / CIP 105565 / TT01) (Photorhabdus luminescens subsp. laumondii)).